The following is a 573-amino-acid chain: Solute carrier family 41 member 2 (573 aa).

At 1-162 the chain is on the extracellular side; it reads MTNCKGRSTI…KESSSIMALQ (162 aa). The helical transmembrane segment at 163 to 183 threads the bilayer; sequence ILVPFLLAGFGTVTAGMVLDI. The Cytoplasmic segment spans residues 184–195; that stretch reads VQHWDVFKNVTE. The chain crosses the membrane as a helical span at residues 196–216; it reads VFILVPALLGLKGNLEMTLAS. The Extracellular segment spans residues 217–245; that stretch reads RLSTAVNIGKMDSPIEKWNLIIGNLALKQ. The chain crosses the membrane as a helical span at residues 246 to 266; sequence VQATVVGFLAAVAAVILGWIP. Residues 267 to 282 lie on the Cytoplasmic side of the membrane; it reads EGKYSFSHSILLCSSS. Residues 283–303 form a helical membrane-spanning segment; sequence VATAFIASLLQGIIMVGVIVG. The Extracellular portion of the chain corresponds to 304–313; sequence SKKTGINPDN. Residues 314 to 334 traverse the membrane as a helical segment; sequence VATPIAASFGDLITLAILAWI. Residues 335–347 are Cytoplasmic-facing; it reads SQGLYTCLETYYY. Residues 348 to 368 form a helical membrane-spanning segment; the sequence is VSPLVGAFFLALTPMGIVIAA. The Extracellular portion of the chain corresponds to 369–376; sequence KHPATRTV. The chain crosses the membrane as a helical span at residues 377–397; sequence LHSGWEPVITAMIISSIGGLI. The Cytoplasmic portion of the chain corresponds to 398–406; that stretch reads LDTTVSDPN. Residues 407 to 427 traverse the membrane as a helical segment; it reads LVGIVVYTPVINGIGGNLVAI. Residues 428–469 are Extracellular-facing; that stretch reads QASRISTYLHLHSIPGELPEEAKGCYYPCRTYYGTGVNNKSA. A helical transmembrane segment spans residues 470 to 490; sequence QVLLLLVIPGHLIFLYTIHLM. The Cytoplasmic segment spans residues 491-499; the sequence is KSGHTSLTP. Residues 500-520 form a helical membrane-spanning segment; sequence IFIAVYLFAALLQVFTLLWIA. At 521-543 the chain is on the extracellular side; sequence DWMVHHFWKKGKDPDSFSIPYLT. A helical membrane pass occupies residues 544–564; the sequence is ALGDLLGTALLAVGFHFLWLI. At 565-573 the chain is on the cytoplasmic side; it reads GDRDGDVGD.

The protein belongs to the SLC41A transporter family.

Its subcellular location is the cell membrane. It carries out the reaction Mg(2+)(in) = Mg(2+)(out). The enzyme catalyses Mn(2+)(in) = Mn(2+)(out). The catalysed reaction is Co(2+)(in) = Co(2+)(out). It catalyses the reaction Ni(2+)(in) = Ni(2+)(out). It carries out the reaction Fe(2+)(in) = Fe(2+)(out). Acts as a plasma-membrane magnesium transporter. Can also mediate the transport of other divalent metal cations in an order of Ba(2+) &gt; Ni(2+) &gt; Co(2+) &gt; Fe(2+) &gt; Mn(2+). This is Solute carrier family 41 member 2 (SLC41A2) from Gallus gallus (Chicken).